Reading from the N-terminus, the 124-residue chain is uncharacterized protein (124 aa).

The N-terminal stretch at 1–23 is a signal peptide; sequence MHKLLKLLSITLIGLSVATGVQA.

It belongs to the cytochrome b562 family.

This is an uncharacterized protein from Pasteurella multocida (strain Pm70).